The following is a 288-amino-acid chain: Translocon-associated protein subunit alpha (288 aa).

The first 28 residues, 1 to 28, serve as a signal peptide directing secretion; the sequence is MFNFGSKILVLFLVAFPCGLISFGRVSA. The Lumenal segment spans residues 29-208; that stretch reads DSESAEDIFP…ELEEGLDGET (180 aa). The tract at residues 34 to 69 is disordered; that stretch reads EDIFPDSTVDEEEEEEEDEVLVEEDQVPGSETEDDI. Asparagine 137 and asparagine 192 each carry an N-linked (GlcNAc...) asparagine glycan. Residues 209–229 traverse the membrane as a helical segment; that stretch reads IFMYIFLTGLVVLAVFGMYQV. Topologically, residues 230–288 are cytoplasmic; sequence LESRTRKRFPVKVETGTGGMNGVDISWIPQETLNIMSKASASPKASPRKRTKRAVGVDQ. The tract at residues 267-288 is disordered; sequence KASASPKASPRKRTKRAVGVDQ.

It belongs to the TRAP-alpha family. In terms of assembly, heterotetramer of TRAP-alpha, TRAP-beta, TRAP-delta and TRAP-gamma. Phosphorylated in its cytoplasmic tail.

Its subcellular location is the endoplasmic reticulum membrane. In terms of biological role, TRAP proteins are part of a complex whose function is to bind calcium to the ER membrane and thereby regulate the retention of ER resident proteins. May be involved in the recycling of the translocation apparatus after completion of the translocation process or may function as a membrane-bound chaperone facilitating folding of translocated proteins. The protein is Translocon-associated protein subunit alpha (ssr1) of Oncorhynchus mykiss (Rainbow trout).